A 286-amino-acid polypeptide reads, in one-letter code: Energy-coupling factor transporter ATP-binding protein EcfA2 (286 aa).

One can recognise an ABC transporter domain in the interval 3 to 246 (IRFDNVSYTY…KEKLADWHIG (244 aa)). 40 to 47 (GQTGSGKS) contributes to the ATP binding site.

Belongs to the ABC transporter superfamily. Energy-coupling factor EcfA family. Forms a stable energy-coupling factor (ECF) transporter complex composed of 2 membrane-embedded substrate-binding proteins (S component), 2 ATP-binding proteins (A component) and 2 transmembrane proteins (T component).

It localises to the cell membrane. In terms of biological role, ATP-binding (A) component of a common energy-coupling factor (ECF) ABC-transporter complex. Unlike classic ABC transporters this ECF transporter provides the energy necessary to transport a number of different substrates. The sequence is that of Energy-coupling factor transporter ATP-binding protein EcfA2 from Staphylococcus aureus (strain MRSA252).